The chain runs to 369 residues: WAT1-related protein At3g53210 (369 aa).

10 helical membrane-spanning segments follow: residues 12–31 (IAMV…MRYA), 39–59 (LVFP…SAYF), 72–92 (FLIQ…GFYI), 103–123 (ASAT…LLGI), 133–153 (GIAK…ITLY), 182–202 (WTLG…WIVL), 214–234 (FSFV…ISAY), 252–272 (ALLY…IYVV), 278–298 (LFVS…ATLA), and 303–323 (FYLG…LVVM). EamA domains lie at 24–150 (NHVI…SLVI) and 194–323 (LCWS…LVVM). The interval 348–369 (GDEEDYHNNKPRSPISQPLISS) is disordered.

This sequence belongs to the drug/metabolite transporter (DMT) superfamily. Plant drug/metabolite exporter (P-DME) (TC 2.A.7.4) family.

It localises to the membrane. The polypeptide is WAT1-related protein At3g53210 (Arabidopsis thaliana (Mouse-ear cress)).